A 152-amino-acid polypeptide reads, in one-letter code: Xanthine-guanine phosphoribosyltransferase (152 aa).

Residues 37-38, Arg69, and 88-96 contribute to the 5-phospho-alpha-D-ribose 1-diphosphate site; these read RG and DDLVDTGGT. A GMP-binding site is contributed by Arg69. Mg(2+) is bound at residue Asp89. The guanine site is built by Asp92 and Ile135. Positions 92 and 135 each coordinate xanthine. GMP-binding positions include 92 to 96 and 134 to 135; these read DTGGT and WI.

The protein belongs to the purine/pyrimidine phosphoribosyltransferase family. XGPT subfamily. Homotetramer. It depends on Mg(2+) as a cofactor.

It is found in the cell inner membrane. The enzyme catalyses GMP + diphosphate = guanine + 5-phospho-alpha-D-ribose 1-diphosphate. It catalyses the reaction XMP + diphosphate = xanthine + 5-phospho-alpha-D-ribose 1-diphosphate. It carries out the reaction IMP + diphosphate = hypoxanthine + 5-phospho-alpha-D-ribose 1-diphosphate. Its pathway is purine metabolism; GMP biosynthesis via salvage pathway; GMP from guanine: step 1/1. It functions in the pathway purine metabolism; XMP biosynthesis via salvage pathway; XMP from xanthine: step 1/1. Purine salvage pathway enzyme that catalyzes the transfer of the ribosyl-5-phosphate group from 5-phospho-alpha-D-ribose 1-diphosphate (PRPP) to the N9 position of the 6-oxopurines guanine and xanthine to form the corresponding ribonucleotides GMP (guanosine 5'-monophosphate) and XMP (xanthosine 5'-monophosphate), with the release of PPi. To a lesser extent, also acts on hypoxanthine. This is Xanthine-guanine phosphoribosyltransferase from Yersinia pseudotuberculosis serotype O:1b (strain IP 31758).